Here is a 192-residue protein sequence, read N- to C-terminus: Xanthine phosphoribosyltransferase (192 aa).

Xanthine-binding residues include leucine 20 and asparagine 27. Residue 128–132 coordinates 5-phospho-alpha-D-ribose 1-diphosphate; that stretch reads ANGDA. Lysine 156 provides a ligand contact to xanthine.

This sequence belongs to the purine/pyrimidine phosphoribosyltransferase family. Xpt subfamily. As to quaternary structure, homodimer.

The protein localises to the cytoplasm. The enzyme catalyses XMP + diphosphate = xanthine + 5-phospho-alpha-D-ribose 1-diphosphate. Its pathway is purine metabolism; XMP biosynthesis via salvage pathway; XMP from xanthine: step 1/1. In terms of biological role, converts the preformed base xanthine, a product of nucleic acid breakdown, to xanthosine 5'-monophosphate (XMP), so it can be reused for RNA or DNA synthesis. This is Xanthine phosphoribosyltransferase from Staphylococcus aureus (strain bovine RF122 / ET3-1).